We begin with the raw amino-acid sequence, 527 residues long: Catalase (527 aa).

Basic and acidic residues predominate over residues 1–22 (MADNRDPASDQMKHWKEQRAAQ). Positions 1–42 (MADNRDPASDQMKHWKEQRAAQKPDVLTTGGGNPVGDKLNSL) are disordered. Position 2 is a blocked amino end (Ala); alternate (A2). A2 carries the N-acetylalanine; alternate modification. The residue at position 9 (S9) is a Phosphoserine. N6-succinyllysine is present on K13. Active-site residues include H75 and N148. Positions 194, 198, 201, 203, 213, and 215 each coordinate NADP(+). K221 carries the N6-succinyllysine modification. K233 carries the post-translational modification N6-acetyllysine. NADP(+)-binding residues include K237, W303, and H305. Y358 is a heme binding site. A phosphoserine mark is found at S417 and S434. The NADP(+) site is built by Q442, T445, and F446. K449 and K480 each carry N6-acetyllysine; alternate. K449 and K480 each carry N6-succinyllysine; alternate. N6-acetyllysine is present on K499. Phosphothreonine is present on T511. S517 bears the Phosphoserine mark. The short motif at 524–527 (KANL) is the Microbody targeting signal; atypical element.

The protein belongs to the catalase family. Homotetramer. Interacts (via microbody targeting signal) with PEX5, monomeric form interacts with PEX5, leading to its translocation into peroxisomes. Heme serves as cofactor. The cofactor is NADP(+).

The protein resides in the peroxisome matrix. It carries out the reaction 2 H2O2 = O2 + 2 H2O. Its function is as follows. Catalyzes the degradation of hydrogen peroxide (H(2)O(2)) generated by peroxisomal oxidases to water and oxygen, thereby protecting cells from the toxic effects of hydrogen peroxide. Promotes growth of cells including T-cells, B-cells, myeloid leukemia cells, melanoma cells, mastocytoma cells and normal and transformed fibroblast cells. This is Catalase (CAT) from Bos taurus (Bovine).